The sequence spans 145 residues: Transcription antitermination protein NusB (145 aa).

This sequence belongs to the NusB family.

Involved in transcription antitermination. Required for transcription of ribosomal RNA (rRNA) genes. Binds specifically to the boxA antiterminator sequence of the ribosomal RNA (rrn) operons. The chain is Transcription antitermination protein NusB from Thiobacillus denitrificans (strain ATCC 25259 / T1).